The following is a 501-amino-acid chain: Vitamin D 25-hydroxylase (501 aa).

Ala250 contacts substrate. Cys448 serves as a coordination point for heme.

Belongs to the cytochrome P450 family. As to quaternary structure, homodimer. Requires heme as cofactor. In terms of tissue distribution, highly expressed in the liver and testis.

It is found in the endoplasmic reticulum membrane. It localises to the microsome membrane. The enzyme catalyses calciol + reduced [NADPH--hemoprotein reductase] + O2 = calcidiol + oxidized [NADPH--hemoprotein reductase] + H2O + H(+). It catalyses the reaction vitamin D2 + reduced [NADPH--hemoprotein reductase] + O2 = 25-hydroxyvitamin D2 + oxidized [NADPH--hemoprotein reductase] + H2O + H(+). It carries out the reaction 1alpha-hydroxyvitamin D2 + reduced [NADPH--hemoprotein reductase] + O2 = 1alpha,25-dihydroxyvitamin D2 + oxidized [NADPH--hemoprotein reductase] + H2O + H(+). The catalysed reaction is alfacalcidol + reduced [NADPH--hemoprotein reductase] + O2 = calcitriol + oxidized [NADPH--hemoprotein reductase] + H2O + H(+). It participates in hormone biosynthesis; vitamin D biosynthesis. In terms of biological role, a cytochrome P450 monooxygenase involved in activation of vitamin D precursors. Catalyzes hydroxylation at C-25 of both forms of vitamin D, vitamin D(2) and D(3) (calciol). Can metabolize vitamin D analogs/prodrugs 1alpha-hydroxyvitamin D(2) (doxercalciferol) and 1alpha-hydroxyvitamin D(3) (alfacalcidol) forming 25-hydroxy derivatives. Mechanistically, uses molecular oxygen inserting one oxygen atom into a substrate, and reducing the second into a water molecule, with two electrons provided by NADPH via cytochrome P450 reductase (CPR; NADPH-ferrihemoprotein reductase). In Mus musculus (Mouse), this protein is Vitamin D 25-hydroxylase (Cyp2r1).